The chain runs to 425 residues: MKSWTSRPVPELPGSMPQLRLYDTALGRVVDVERQPEQSMYVCGITPYDATHMGHAASYVAFDLLNRAWRDAGVRVSYVQNVTDIDDPLLERATATGVDWRELAQSQIDLFQTDMDALNVLAPNHYIGAVEAIPDIVPAIEQLIADGVAYRVAGSEGEPDGDVYYDVETAGKRSDATDAWTLGDVSGLGEKEMLELFAERGGDPTRAGKRHALDPLLWRVARDGEPSWPGSTLGDGRPGWHIECTVIAQKYLPAPFTVQGGGSDLVFPHHEMGAGHAYSLSGVPLARHYSHAGMVGLDGEKMSKSKGNLVLVSKLRAAGEEPAAIRLAILAHHYRSDWSWTDAEFAEAKDRLKQWRAALDHAPAGSAAALISAMRDELANDLNAPGAIAAVDHWAAEAIRSGSDKSEQDTALVTDAIDALLGVEL.

C43 contributes to the Zn(2+) binding site. L-cysteinyl-5'-AMP contacts are provided by residues 43–46, S58, and 81–83; these read CGIT and NVT. Residues 45-55 carry the 'HIGH' region motif; that stretch reads ITPYDATHMGH. The 'ERGGDP' region motif lies at 199 to 204; that stretch reads ERGGDP. W240 lines the L-cysteinyl-5'-AMP pocket. C244 serves as a coordination point for Zn(2+). 262–264 provides a ligand contact to L-cysteinyl-5'-AMP; that stretch reads GSD. Zn(2+) is bound at residue H269. V295 is a binding site for L-cysteinyl-5'-AMP. Positions 301–305 match the 'KMSKS' region motif; it reads KMSKS.

Belongs to the class-I aminoacyl-tRNA synthetase family. MshC subfamily. As to quaternary structure, monomer. It depends on Zn(2+) as a cofactor.

It catalyses the reaction 1D-myo-inositol 2-amino-2-deoxy-alpha-D-glucopyranoside + L-cysteine + ATP = 1D-myo-inositol 2-(L-cysteinylamino)-2-deoxy-alpha-D-glucopyranoside + AMP + diphosphate + H(+). Its function is as follows. Catalyzes the ATP-dependent condensation of GlcN-Ins and L-cysteine to form L-Cys-GlcN-Ins. This Paenarthrobacter aurescens (strain TC1) protein is L-cysteine:1D-myo-inositol 2-amino-2-deoxy-alpha-D-glucopyranoside ligase.